Here is a 204-residue protein sequence, read N- to C-terminus: Ribosomal RNA small subunit methyltransferase G (204 aa).

3 residues coordinate S-adenosyl-L-methionine: Gly-73, Phe-78, and Arg-139.

The protein belongs to the methyltransferase superfamily. RNA methyltransferase RsmG family.

The protein localises to the cytoplasm. It carries out the reaction guanosine(527) in 16S rRNA + S-adenosyl-L-methionine = N(7)-methylguanosine(527) in 16S rRNA + S-adenosyl-L-homocysteine. Functionally, specifically methylates the N7 position of guanine in position 527 of 16S rRNA. The protein is Ribosomal RNA small subunit methyltransferase G of Coxiella burnetii (strain RSA 331 / Henzerling II).